We begin with the raw amino-acid sequence, 282 residues long: NADPH-dependent 7-cyano-7-deazaguanine reductase (282 aa).

Isoleucine 88 to serine 90 contributes to the substrate binding site. Serine 90–lysine 91 contacts NADPH. Cysteine 190 (thioimide intermediate) is an active-site residue. The active-site Proton donor is aspartate 197. Histidine 229–glutamate 230 contributes to the substrate binding site. Arginine 258 to glycine 259 provides a ligand contact to NADPH.

It belongs to the GTP cyclohydrolase I family. QueF type 2 subfamily. As to quaternary structure, homodimer.

Its subcellular location is the cytoplasm. It catalyses the reaction 7-aminomethyl-7-carbaguanine + 2 NADP(+) = 7-cyano-7-deazaguanine + 2 NADPH + 3 H(+). It functions in the pathway tRNA modification; tRNA-queuosine biosynthesis. Catalyzes the NADPH-dependent reduction of 7-cyano-7-deazaguanine (preQ0) to 7-aminomethyl-7-deazaguanine (preQ1). This chain is NADPH-dependent 7-cyano-7-deazaguanine reductase, found in Escherichia coli O17:K52:H18 (strain UMN026 / ExPEC).